The chain runs to 327 residues: L-lactate dehydrogenase 1 (327 aa).

Residues V21, D42, K47, Y72, and 86 to 87 (GA) contribute to the NAD(+) site. Substrate-binding positions include Q89, R95, and 127–130 (NPVD). Residues 125–127 (AAN) and S150 each bind NAD(+). 155 to 158 (DSAR) provides a ligand contact to substrate. Residues R160 and H175 each coordinate beta-D-fructose 1,6-bisphosphate. Residue H182 is the Proton acceptor of the active site. Position 227 is a phosphotyrosine (Y227). T236 provides a ligand contact to substrate.

This sequence belongs to the LDH/MDH superfamily. LDH family. As to quaternary structure, homotetramer.

The protein resides in the cytoplasm. It catalyses the reaction (S)-lactate + NAD(+) = pyruvate + NADH + H(+). Its pathway is fermentation; pyruvate fermentation to lactate; (S)-lactate from pyruvate: step 1/1. Allosterically activated by fructose 1,6-bisphosphate (FBP). In terms of biological role, catalyzes the conversion of lactate to pyruvate. The protein is L-lactate dehydrogenase 1 of Enterococcus faecalis (strain ATCC 700802 / V583).